Reading from the N-terminus, the 201-residue chain is Cytochrome c oxidase assembly protein CtaG (201 aa).

At 1–12 (MTDQGENEKKQR) the chain is on the cytoplasmic side. Residues 13-35 (RSNATIAVACLSFFVCMIGAAYA) traverse the membrane as a helical; Signal-anchor for type II membrane protein segment. The Periplasmic portion of the chain corresponds to 36–201 (SVPLYRIFCQ…KAVGSTRNGG (166 aa)).

It belongs to the COX11/CtaG family.

The protein resides in the cell inner membrane. Functionally, exerts its effect at some terminal stage of cytochrome c oxidase synthesis, probably by being involved in the insertion of the copper B into subunit I. This chain is Cytochrome c oxidase assembly protein CtaG, found in Brucella suis biovar 1 (strain 1330).